Here is a 131-residue protein sequence, read N- to C-terminus: Interleukin-13 (131 aa).

The N-terminal stretch at 1–18 is a signal peptide; it reads MALWLTVVIALTCLGGLA. N-linked (GlcNAc...) asparagine glycans are attached at residues asparagine 38, asparagine 48, asparagine 56, and asparagine 71. Disulfide bonds link cysteine 47/cysteine 75 and cysteine 63/cysteine 89.

This sequence belongs to the IL-4/IL-13 family. As to quaternary structure, interacts with IL13RA2.

It localises to the secreted. In terms of biological role, cytokine that plays important roles in allergic inflammation and immune response to parasite infection. Synergizes with IL2 in regulating interferon-gamma synthesis. Stimulates B-cell proliferation, and activation of eosinophils, basophils, and mast cells. Plays an important role in controlling IL33 activity by modulating the production of transmembrane and soluble forms of interleukin-1 receptor-like 1/IL1RL1. Displays the capacity to antagonize Th1-driven proinflammatory immune response and downregulates synthesis of many proinflammatory cytokines including IL1, IL6, IL10, IL12 and TNF-alpha through a mechanism that partially involves suppression of NF-kappa-B. Also functions on nonhematopoietic cells, including endothelial cells where it induces vascular cell adhesion protein 1/VCAM1, which is important in the recruitment of eosinophils. Exerts its biological effects through its receptors which comprises the IL4R chain and the IL13RA1 chain, to activate JAK1 and TYK2, leading to the activation of STAT6. Aside from IL13RA1, another receptor IL13RA2 acts as a high affinity decoy for IL13 and mediates internalization and depletion of extracellular IL13. The sequence is that of Interleukin-13 (IL13) from Canis lupus familiaris (Dog).